Consider the following 1072-residue polypeptide: E3 ubiquitin-protein ligase RNF31 (1072 aa).

Residues 1-485 (MPGEEEERAF…PEKQRQDKMR (485 aa)) are polyubiquitin-binding. The PUB domain maps to 71-142 (TLSTALNILE…SFPEGQEEPD (72 aa)). A disordered region spans residues 263 to 290 (QGTHLSPSLPASAQPRPQSTSLLALGDS). The segment covering 265–280 (THLSPSLPASAQPRPQ) has biased composition (polar residues). Over residues 281–290 (STSLLALGDS) the composition is skewed to low complexity. 2 RanBP2-type zinc fingers span residues 299 to 329 (SAHL…PRGC) and 350 to 379 (ARGR…PRLA). At Ser-383 the chain carries Phosphoserine. A RanBP2-type 3 zinc finger spans residues 409–438 (QSQVWYCIHCTFCNSSPGWVCVMCNRTSSP). The segment at 443–484 (HAPRPYASSLEKGPPKPGPPRRLSAPLPSSCGDPEKQRQDKM) is disordered. A compositionally biased stretch (low complexity) spans 463–472 (RRLSAPLPSS). Ser-466 bears the Phosphoserine mark. Basic and acidic residues predominate over residues 475–484 (DPEKQRQDKM). An interaction with RBCK1 region spans residues 563–616 (GNLDEAVEECVRTRRRKVQELQSLGFGPEEGSLQALFQHGGDVSRALTELQRQR). The UBA domain maps to 564 to 615 (NLDEAVEECVRTRRRKVQELQSLGFGPEEGSLQALFQHGGDVSRALTELQRQ). A TRIAD supradomain region spans residues 695–929 (LAQECAVCGW…KSLHGHHPRD (235 aa)). Zn(2+)-binding residues include Cys-699, Cys-702, Cys-717, Cys-719, Cys-722, and Cys-725. The segment at 699 to 749 (CAVCGWALPHNRMQALTSCECTICPDCFRQHFTIALKEKHITDMVCPACGR) adopts an RING-type 1 zinc-finger fold. Residue Lys-735 forms a (Microbial infection) Glycyl lysine isopeptide (Lys-Gly) (interchain with G-Cter in ubiquitin) linkage. Positions 744 and 747 each coordinate Zn(2+). An IBR-type zinc finger spans residues 779–841 (ALFHKKLTEG…WEEQHRGRSC (63 aa)). Lys-783 is covalently cross-linked ((Microbial infection) Glycyl lysine isopeptide (Lys-Gly) (interchain with G-Cter in ubiquitin)). Zn(2+) is bound by residues Cys-799, Cys-802, Cys-817, Cys-820, Cys-825, Cys-828, His-836, Cys-841, Cys-871, and Cys-874. An RING-type 2; atypical zinc finger spans residues 871-901 (CPKCKFSYALARGGCMHFHCTQCRHQFCSGC). Lys-875 is covalently cross-linked ((Microbial infection) Glycyl lysine isopeptide (Lys-Gly) (interchain with G-Cter in ubiquitin)). Cys-885 is a catalytic residue. Residues Cys-890, Cys-893, Cys-898, Cys-901, Cys-916, and His-925 each contribute to the Zn(2+) site. The tract at residues 910 to 1072 (KCPEPNCRVK…LGQSIPRRRK (163 aa)) is LDD domain.

Belongs to the RBR family. Component of the LUBAC complex (linear ubiquitin chain assembly complex) which consists of SHARPIN, RBCK1 and RNF31. LUBAC has a MW of approximately 600 kDa suggesting a heteromultimeric assembly of its subunits. Associates with the TNF-R1 signaling complex (TNF-RSC) in a stimulation-dependent manner. Interacts (via the PUB domain) with OTULIN (via the PIM motif); the interaction is direct. Interacts (via the PUB domain) with VCP (via the PIM motif). Interacts (via the PUB domain) with SPATA2 (via the PIM motif); interaction is direct and bridges RNF31 and CYLD. Interacts with CYLD; the interaction is indirect and is mediated via SPATA2. Interacts with MUSK. Interacts with CARD11, promoting linear ubiquitination of BCL10. As to quaternary structure, (Microbial infection) Interacts with S.flexneri E3 ubiquitin-protein ligases IpaH1.4 and IpaH2.5, leading to its ubiquitination. Post-translationally, autoubiquitinated. Interaction with OTULIN is required to suppress formation of 'Met-1'-linked polyubiquitin chains and prevent subsequent inactivation of the LUBAC complex. In terms of processing, cleaved by caspase during apoptosis. (Microbial infection) Ubiquitinated by S.flexneri E3 ubiquitin-protein ligases IpaH1.4 and IpaH2.5, leading to its degradation by the proteasome, thereby preventing formation of the bacterial ubiquitin coat and activation of innate immunity. As to expression, expressed in both normal and transformed breast epithelial cell lines.

The protein resides in the cytoplasm. The catalysed reaction is [E2 ubiquitin-conjugating enzyme]-S-ubiquitinyl-L-cysteine + [acceptor protein]-L-lysine = [E2 ubiquitin-conjugating enzyme]-L-cysteine + [acceptor protein]-N(6)-ubiquitinyl-L-lysine.. Its pathway is protein modification; protein ubiquitination. Functionally, E3 ubiquitin-protein ligase component of the LUBAC complex which conjugates linear ('Met-1'-linked) polyubiquitin chains to substrates and plays a key role in NF-kappa-B activation and regulation of inflammation. LUBAC conjugates linear polyubiquitin to IKBKG and RIPK1 and is involved in activation of the canonical NF-kappa-B and the JNK signaling pathways. Linear ubiquitination mediated by the LUBAC complex interferes with TNF-induced cell death and thereby prevents inflammation. LUBAC is recruited to the TNF-R1 signaling complex (TNF-RSC) following polyubiquitination of TNF-RSC components by BIRC2 and/or BIRC3 and to conjugate linear polyubiquitin to IKBKG and possibly other components contributing to the stability of the complex. The LUBAC complex is also involved in innate immunity by conjugating linear polyubiquitin chains at the surface of bacteria invading the cytosol to form the ubiquitin coat surrounding bacteria. LUBAC is not able to initiate formation of the bacterial ubiquitin coat, and can only promote formation of linear polyubiquitins on pre-existing ubiquitin. Recruited to the surface of bacteria by RNF213, which initiates the bacterial ubiquitin coat. The bacterial ubiquitin coat acts as an 'eat-me' signal for xenophagy and promotes NF-kappa-B activation. Together with OTULIN, the LUBAC complex regulates the canonical Wnt signaling during angiogenesis. RNF31 is required for linear ubiquitination of BCL10, thereby promoting TCR-induced NF-kappa-B activation. Binds polyubiquitin of different linkage types. The sequence is that of E3 ubiquitin-protein ligase RNF31 from Homo sapiens (Human).